Consider the following 599-residue polypeptide: Potassium-transporting ATPase potassium-binding subunit (599 aa).

12 helical membrane-spanning segments follow: residues Leu-8 to Ala-28, Trp-61 to Leu-81, Ala-133 to Phe-153, Ala-176 to Ile-196, Leu-280 to Phe-300, Trp-311 to Ala-331, Ile-366 to Ala-386, Phe-391 to Gly-411, Gly-416 to Gly-436, Ile-456 to Gly-476, Leu-521 to Ala-541, and Leu-563 to Ala-583.

This sequence belongs to the KdpA family. As to quaternary structure, the system is composed of three essential subunits: KdpA, KdpB and KdpC.

It localises to the cell inner membrane. Its function is as follows. Part of the high-affinity ATP-driven potassium transport (or Kdp) system, which catalyzes the hydrolysis of ATP coupled with the electrogenic transport of potassium into the cytoplasm. This subunit binds the periplasmic potassium ions and delivers the ions to the membrane domain of KdpB through an intramembrane tunnel. This is Potassium-transporting ATPase potassium-binding subunit from Polaromonas naphthalenivorans (strain CJ2).